The following is a 297-amino-acid chain: Acetylglutamate kinase (297 aa).

Substrate contacts are provided by residues 73–74 (GG), Arg-95, and Asn-188.

It belongs to the acetylglutamate kinase family. ArgB subfamily.

The protein resides in the cytoplasm. The catalysed reaction is N-acetyl-L-glutamate + ATP = N-acetyl-L-glutamyl 5-phosphate + ADP. The protein operates within amino-acid biosynthesis; L-arginine biosynthesis; N(2)-acetyl-L-ornithine from L-glutamate: step 2/4. Its function is as follows. Catalyzes the ATP-dependent phosphorylation of N-acetyl-L-glutamate. This chain is Acetylglutamate kinase, found in Nostoc sp. (strain PCC 7120 / SAG 25.82 / UTEX 2576).